A 300-amino-acid chain; its full sequence is 4-hydroxy-tetrahydrodipicolinate synthase (300 aa).

Position 45 (Thr-45) interacts with pyruvate. Tyr-140 (proton donor/acceptor) is an active-site residue. Residue Lys-169 is the Schiff-base intermediate with substrate of the active site. Ile-210 serves as a coordination point for pyruvate.

This sequence belongs to the DapA family. As to quaternary structure, homotetramer; dimer of dimers.

It is found in the cytoplasm. The catalysed reaction is L-aspartate 4-semialdehyde + pyruvate = (2S,4S)-4-hydroxy-2,3,4,5-tetrahydrodipicolinate + H2O + H(+). Its pathway is amino-acid biosynthesis; L-lysine biosynthesis via DAP pathway; (S)-tetrahydrodipicolinate from L-aspartate: step 3/4. Catalyzes the condensation of (S)-aspartate-beta-semialdehyde [(S)-ASA] and pyruvate to 4-hydroxy-tetrahydrodipicolinate (HTPA). The chain is 4-hydroxy-tetrahydrodipicolinate synthase from Helicobacter pylori (strain J99 / ATCC 700824) (Campylobacter pylori J99).